We begin with the raw amino-acid sequence, 329 residues long: Probable carboxylesterase 13 (329 aa).

Methionine 1 carries the N-acetylmethionine modification. The Involved in the stabilization of the negatively charged intermediate by the formation of the oxyanion hole signature appears at 81–83; sequence HGG. Residues serine 165, aspartate 269, and histidine 302 contribute to the active site.

Belongs to the 'GDXG' lipolytic enzyme family. As to expression, expressed in flowers.

It catalyses the reaction a carboxylic ester + H2O = an alcohol + a carboxylate + H(+). Carboxylesterase acting on esters with varying acyl chain length. The sequence is that of Probable carboxylesterase 13 (CXE13) from Arabidopsis thaliana (Mouse-ear cress).